A 180-amino-acid polypeptide reads, in one-letter code: Putative protein 33K (180 aa).

The disordered stretch occupies residues 31-108; the sequence is LEEAYKQLEK…AKAPRNYGTP (78 aa). The span at 33–43 shows a compositional bias: basic and acidic residues; the sequence is EAYKQLEKELG. Acidic residues predominate over residues 60–78; that stretch reads PLSEGELEEISEEEEEEGE.

This Pantherophis guttatus (Corn snake) protein is Putative protein 33K.